Reading from the N-terminus, the 326-residue chain is Adenosine receptor A1 (326 aa).

Residues 1–10 (MPPSISAFQA) are Extracellular-facing. Residues 11 to 33 (AYIGIEVLIALVSVPGNVLVIWA) form a helical membrane-spanning segment. The Cytoplasmic portion of the chain corresponds to 34-46 (VKVNQALRDATFC). A helical membrane pass occupies residues 47–69 (FIVSLAVADVAVGALVIPLAILI). Over 70 to 80 (NIGPRTYFHTC) the chain is Extracellular. An intrachain disulfide couples Cys80 to Cys169. The helical transmembrane segment at 81 to 102 (LKVACPVLILTQSSILALLAIA) threads the bilayer. The Cytoplasmic segment spans residues 103–123 (VDRYLRVKIPLRYKTVVTPRR). The chain crosses the membrane as a helical span at residues 124 to 146 (AVVAITGCWILSFVVGLTPMFGW). The Extracellular segment spans residues 147-176 (NNLSAVERDWLANGSVGEPVIECQFEKVIS). Asn148 and Asn159 each carry an N-linked (GlcNAc...) asparagine glycan. The helical transmembrane segment at 177-201 (MEYMVYFNFFVWVLPPLLLMVLIYM) threads the bilayer. At 202–235 (EVFYLIRKQLNKKVSASSGDPQKYYGKELKIAKS) the chain is on the cytoplasmic side. The helical transmembrane segment at 236 to 259 (LALILFLFALSWLPLHILNCITLF) threads the bilayer. The Extracellular portion of the chain corresponds to 260–267 (CPSCHMPR). A helical transmembrane segment spans residues 268–292 (ILIYIAIFLSHGNSAMNPIVYAFRI). The Cytoplasmic portion of the chain corresponds to 293–326 (QKFRVTFLKIWNDHFRCQPAPPVDEDAPAERPDD). The S-palmitoyl cysteine moiety is linked to residue Cys309.

This sequence belongs to the G-protein coupled receptor 1 family.

It localises to the cell membrane. In terms of biological role, receptor for adenosine. The activity of this receptor is mediated by G proteins which inhibit adenylyl cyclase. This Bos taurus (Bovine) protein is Adenosine receptor A1 (ADORA1).